The chain runs to 316 residues: Transaldolase (316 aa).

K132 (schiff-base intermediate with substrate) is an active-site residue.

It belongs to the transaldolase family. Type 1 subfamily. In terms of assembly, homodimer.

The protein resides in the cytoplasm. It carries out the reaction D-sedoheptulose 7-phosphate + D-glyceraldehyde 3-phosphate = D-erythrose 4-phosphate + beta-D-fructose 6-phosphate. The protein operates within carbohydrate degradation; pentose phosphate pathway; D-glyceraldehyde 3-phosphate and beta-D-fructose 6-phosphate from D-ribose 5-phosphate and D-xylulose 5-phosphate (non-oxidative stage): step 2/3. Transaldolase is important for the balance of metabolites in the pentose-phosphate pathway. This Aliivibrio salmonicida (strain LFI1238) (Vibrio salmonicida (strain LFI1238)) protein is Transaldolase.